A 348-amino-acid chain; its full sequence is Fe-S cluster assembly protein DRE2 (348 aa).

The N-terminal SAM-like domain stretch occupies residues 1 to 162 (MSQYKTGLLL…KKASSSTSNL (162 aa)). The tract at residues 137 to 170 (KTNNTKLQSGSKLPTFKKASSSTSNLPSFKKADH) is disordered. Residues 144–163 (QSGSKLPTFKKASSSTSNLP) show a composition bias toward polar residues. Residues 163 to 242 (PSFKKADHSR…EEELIDEDGS (80 aa)) are linker. Ser206 is modified (phosphoserine). [2Fe-2S] cluster contacts are provided by Cys252, Cys263, Cys266, and Cys268. The tract at residues 252–268 (CGKSKTKKKKACKDCTC) is fe-S binding site A. Cys311, Cys314, Cys322, and Cys325 together coordinate [4Fe-4S] cluster. Short sequence motifs (cx2C motif) lie at residues 311-314 (CGSC) and 322-325 (CSGC). The segment at 311-325 (CGSCSLGDAFRCSGC) is fe-S binding site B.

This sequence belongs to the anamorsin family. Monomer. Interacts with TAH18. Interacts with MIA40. The cofactor is [2Fe-2S] cluster. [4Fe-4S] cluster serves as cofactor.

It is found in the cytoplasm. The protein localises to the mitochondrion intermembrane space. Functionally, component of the cytosolic iron-sulfur (Fe-S) protein assembly (CIA) machinery required for the maturation of extramitochondrial Fe-S proteins. Part of an electron transfer chain functioning in an early step of cytosolic Fe-S biogenesis, facilitating the de novo assembly of a [4Fe-4S] cluster on the scaffold complex CFD1-NBP35. Electrons are transferred to DRE2 from NADPH via the FAD- and FMN-containing protein TAH18. TAH18-DRE2 are also required for the assembly of the diferric tyrosyl radical cofactor of ribonucleotide reductase (RNR), probably by providing electrons for reduction during radical cofactor maturation in the catalytic small subunit RNR2. This is Fe-S cluster assembly protein DRE2 from Saccharomyces cerevisiae (strain Lalvin EC1118 / Prise de mousse) (Baker's yeast).